The chain runs to 761 residues: Proline-rich extensin-like protein EPR1 (761 aa).

Residues 1–24 form the signal peptide; the sequence is MRVPLIDFLRFLVLILSLSGASVA. Residues 63 to 77 form a 1; degenerate repeat; it reads YSPPIYPPPIQKPPT. The tract at residues 63–735 is 40 X 17 AA approximate tandem repeats of Y-S-P-P-[IV]-[KY]-P-P-P-x(1,2)-K-P-P-T-P-T; that stretch reads YSPPIYPPPI…PPVQVPPTPT (673 aa). Tandem repeats lie at residues 78–94, 95–111, 112–128, 129–145, 146–162, 163–179, 180–195, 196–212, 213–229, 230–246, 247–263, 264–280, 281–297, 298–314, 315–331, 332–347, 348–364, 365–381, 382–398, 399–415, 416–431, 432–448, 449–465, 466–481, 482–498, 499–515, 516–531, 532–548, 549–565, 566–582, 583–599, 600–616, 617–633, 634–650, 651–667, 668–684, 685–701, 702–718, and 719–735. The segment covering 111–750 has biased composition (pro residues); it reads TYSPPIYPPP…QGGYGTPPPY (640 aa). The tract at residues 111 to 761 is disordered; that stretch reads TYSPPIYPPP…YLSHPIDIRN (651 aa).

The protein belongs to the extensin family. In terms of tissue distribution, specifically expressed in endosperm during seed germination, at the site of radicle protrusion.

It localises to the secreted. Its subcellular location is the primary cell wall. In terms of biological role, may have a specific role in modifying the cell-wall structure, specifically during seed germination, thus facilitating radicle protrusion. This chain is Proline-rich extensin-like protein EPR1 (EPR1), found in Arabidopsis thaliana (Mouse-ear cress).